A 384-amino-acid polypeptide reads, in one-letter code: Glutamate 5-kinase (384 aa).

Residue Lys24 coordinates ATP. Residues Ser64, Asp149, and Asn161 each coordinate substrate. Residues 181–182 and 223–229 contribute to the ATP site; these read TD and TGGMRTK. Residues 288-370 enclose the PUA domain; it reads PGAILIDAGA…RDIQPLLGYT (83 aa).

This sequence belongs to the glutamate 5-kinase family.

It localises to the cytoplasm. The enzyme catalyses L-glutamate + ATP = L-glutamyl 5-phosphate + ADP. Its pathway is amino-acid biosynthesis; L-proline biosynthesis; L-glutamate 5-semialdehyde from L-glutamate: step 1/2. Catalyzes the transfer of a phosphate group to glutamate to form L-glutamate 5-phosphate. The sequence is that of Glutamate 5-kinase from Xylella fastidiosa (strain 9a5c).